The sequence spans 506 residues: MGTPIKASLLALFLFFLLSPTAFSVSNGGLLRVGLKKRKVDRLDQLRAHGVHMLGNARKDFGFRRTLSDSGSGIVALTNDRDTAYYGEIGIGTPPQNFAVIFDTGSSDLWVPSTKCDTSLACVIHPRYDSGDSSTYKGNGTTASIQYGTGAIVGFYSQDSVEVGDLVVEHQDFIETTEEDDTVFLKSEFDGILGLGFQEISAGKAVPVWYNMVNQGLVEEAVFSFWLNRNVDEEEGGELVFGGVDPNHFRGNHTYVPVTRKGYWQFEMGDVLIGDKSSGFCAGGCAAIADSGTSFFAGPTAIITQINQAIGAKGVLNQQCKTLVGQYGKNMIQMLTSEVQPDKICSHMKLCTFDGAHDVRSMIESVVDKNNDKSSGGEICTFCEMALVRMQNEIKRNETEDNIINHVNEVCDQLPTSSAESIVDCNGISSMPNIAFTIGSKLFEVTPEQYIYKVGEGEAATCISGFTALDIMSPQGPIWILGDMFMGPYHTVFDYGKLRVGFAEAV.

Positions 1 to 24 (MGTPIKASLLALFLFFLLSPTAFS) are cleaved as a signal peptide. The propeptide occupies 25–70 (VSNGGLLRVGLKKRKVDRLDQLRAHGVHMLGNARKDFGFRRTLSDS). The Peptidase A1 domain occupies 85–503 (YYGEIGIGTP…DYGKLRVGFA (419 aa)). The active site involves Asp-103. A disulfide bridge connects residues Cys-116 and Cys-122. Residues Asn-139 and Asn-252 are each glycosylated (N-linked (GlcNAc...) asparagine). Cys-281 and Cys-285 are joined by a disulfide. The active site involves Asp-290. Residues 315–417 (VLNQQCKTLV…NEVCDQLPTS (103 aa)) enclose the Saposin B-type domain. 4 disulfides stabilise this stretch: Cys-320–Cys-411, Cys-345–Cys-383, Cys-351–Cys-380, and Cys-425–Cys-462. Asn-397 carries N-linked (GlcNAc...) asparagine glycosylation.

This sequence belongs to the peptidase A1 family. In terms of assembly, heterodimer of a light chain and a heavy chain. An intermediate form is produced first, and undergoes proteolytic processing to remove the internal plant-specific insert (PSI) and the propeptide. As to expression, detected in pistils, but not in seeds, bracts, midribs, roots, leaves or stamen extracts. Detected in seeds. In stigmas and styles, detected in the transmitting tissue and in contiguous subepidermal layers at the longitudenal grooves of the stigma (at protein level).

The protein resides in the microsome membrane. The protein localises to the protein storage vacuole. Its subcellular location is the secreted. It localises to the cell wall. It is found in the extracellular space. The protein resides in the extracellular matrix. Inhibited by the specific aspartic proteinase inhibitors diazoacetyl-noleucine methyl ester and pepstatin. Aspartic protease. Cleaves alpha-lactalbumin but not beta-lactoglobulin. The sequence is that of Procardosin-B from Cynara cardunculus (Cardoon).